We begin with the raw amino-acid sequence, 464 residues long: Trigger factor (464 aa).

Positions 162–243 constitute a PPIase FKBP-type domain; that stretch reads GDFISIDLSA…VGTVKERELP (82 aa). The interval 428-464 is disordered; the sequence is GASVDTAELFGNGEADTEEAASTDEVASDSAEGEDQK.

The protein belongs to the FKBP-type PPIase family. Tig subfamily.

Its subcellular location is the cytoplasm. It catalyses the reaction [protein]-peptidylproline (omega=180) = [protein]-peptidylproline (omega=0). Involved in protein export. Acts as a chaperone by maintaining the newly synthesized protein in an open conformation. Functions as a peptidyl-prolyl cis-trans isomerase. This Rhodococcus opacus (strain B4) protein is Trigger factor.